Consider the following 481-residue polypeptide: Eukaryotic translation initiation factor 3 subunit L (481 aa).

Residues 1–22 (MSVDARTAYPGSRPPANMQDES) are disordered. Residues 262–457 (DAIRTFSHIL…DLDYAIEGNL (196 aa)) enclose the PCI domain.

This sequence belongs to the eIF-3 subunit L family. In terms of assembly, component of the eukaryotic translation initiation factor 3 (eIF-3) complex.

It is found in the cytoplasm. Its function is as follows. Component of the eukaryotic translation initiation factor 3 (eIF-3) complex, which is involved in protein synthesis of a specialized repertoire of mRNAs and, together with other initiation factors, stimulates binding of mRNA and methionyl-tRNAi to the 40S ribosome. The eIF-3 complex specifically targets and initiates translation of a subset of mRNAs involved in cell proliferation. This is Eukaryotic translation initiation factor 3 subunit L from Coccidioides immitis (strain RS) (Valley fever fungus).